Consider the following 569-residue polypeptide: Sulfite reductase [NADPH] hemoprotein beta-component (569 aa).

Residues C434, C440, C479, and C483 each coordinate [4Fe-4S] cluster. Position 483 (C483) interacts with siroheme.

The protein belongs to the nitrite and sulfite reductase 4Fe-4S domain family. As to quaternary structure, alpha(8)-beta(8). The alpha component is a flavoprotein, the beta component is a hemoprotein. Requires siroheme as cofactor. [4Fe-4S] cluster is required as a cofactor.

The catalysed reaction is hydrogen sulfide + 3 NADP(+) + 3 H2O = sulfite + 3 NADPH + 4 H(+). Its pathway is sulfur metabolism; hydrogen sulfide biosynthesis; hydrogen sulfide from sulfite (NADPH route): step 1/1. Functionally, component of the sulfite reductase complex that catalyzes the 6-electron reduction of sulfite to sulfide. This is one of several activities required for the biosynthesis of L-cysteine from sulfate. The protein is Sulfite reductase [NADPH] hemoprotein beta-component of Staphylococcus carnosus (strain TM300).